Reading from the N-terminus, the 443-residue chain is Threonine/serine transporter TdcC (443 aa).

11 helical membrane-spanning segments follow: residues 22–42, 44–64, 97–117, 140–160, 163–183, 207–227, 259–279, 319–339, 366–386, 389–409, and 423–443; these read TTWT…FFPI, AGFG…PIAF, GVVI…IYGV, FVAL…KDLM, VMSY…LSLI, ILVT…FSPI, ASML…FTLS, ASII…LGTL, ISMI…PNIL, IEAM…MYAI, and DNVF…YKLF.

This sequence belongs to the amino acid/polyamine transporter 2 family. SdaC/TdcC subfamily.

The protein resides in the cell inner membrane. The catalysed reaction is L-threonine(in) + H(+)(in) = L-threonine(out) + H(+)(out). The enzyme catalyses L-serine(in) + H(+)(in) = L-serine(out) + H(+)(out). Involved in the import of threonine and serine into the cell, with the concomitant import of a proton (symport system). The sequence is that of Threonine/serine transporter TdcC from Salmonella newport (strain SL254).